Reading from the N-terminus, the 390-residue chain is Multidrug resistance protein MdtL (390 aa).

The next 12 membrane-spanning stretches (helical) occupy residues 4–24, 42–62, 69–89, 93–113, 131–151, 158–178, 199–221, 245–265, 269–289, 293–313, 316–336, and 353–375; these read FLICSFALVLLYPAGIDMYLV, IAFSVYLAGMATAMLFAGKVA, PVAIAGAVIFIIASMLCSRAT, LFLTGRFIQGIGAGCCYVVAF, LLNGITCIVPVLAPVLGHLIM, SLFYTMIAMGIAVCLLSVFIL, LLNRFFLSRLAITTLSVSVILTF, ALTAGISMAVSFSTPFALSVF, TLMLTSQGLFLAAGIVLSLSS, VTLFGLTLICAGFSVGFGVAM, ALGPFSLRAGVASSVLGIAQV, and ALNMLIGILIGCSMVCILLLMTI.

The protein belongs to the major facilitator superfamily. DHA1 family. MdtL (TC 2.A.1.2.22) subfamily.

Its subcellular location is the cell inner membrane. The sequence is that of Multidrug resistance protein MdtL from Citrobacter koseri (strain ATCC BAA-895 / CDC 4225-83 / SGSC4696).